Reading from the N-terminus, the 175-residue chain is Regenerating islet-derived protein 3-gamma (175 aa).

Residues 1–26 (MLPPMALPSVSWMLLSCLILLCQVQG) form the signal peptide. The propeptide occupies 27–37 (EETQKELPSPR). 3 disulfide bridges follow: C40–C51, C68–C171, and C146–C163. Residues 47–172 (YGSPCYALFL…CDAKLPYVCK (126 aa)) enclose the C-type lectin domain. Residues 103 to 118 (WIGLHDPTQGSEPDGD) are sufficient to activate EXTL3. Residue H107 participates in Zn(2+) binding. The EPN motif lies at 114–116 (EPD). Positions 121 and 145 each coordinate Zn(2+).

In terms of assembly, forms a hexameric membrane-permeabilizing oligomeric pore on membrane phospholipids. The hexamer is formed by three dimers related by helical symmetry. Forms filaments, filamentation traps pore complexes and limits damage to host cells. Interacts with EXTL3. Proteolytic processing by trypsin removes an inhibitory N-terminal propeptide and is essential for peptidoglycan binding and antibacterial activity. In terms of tissue distribution, predominantly expressed in pancreas, where it may be restricted to exocrine pancreas. Moderate expression levels in testis and weak in heart, kidney and placenta.

The protein resides in the secreted. Its subcellular location is the cytoplasm. Its activity is regulated as follows. Lipopolysaccharide inhibits pore-forming activity, explaining why is bactericidal for Gram-positive but not Gram-negative bacteria. In terms of biological role, bactericidal C-type lectin which acts exclusively against Gram-positive bacteria and mediates bacterial killing by binding to surface-exposed carbohydrate moieties of peptidoglycan. Restricts bacterial colonization of the intestinal epithelial surface and consequently limits activation of adaptive immune responses by the microbiota. Functionally, acts as a hormone in response to different stimuli like anti-inflammatory signals, such as IL17A, or gut microbiome. Is secreted by different cell types to activate its receptor EXTL3 and induce cell specific signaling pathways. Induced by IL17A in keratinocytes, regulates keratinocyte proliferation and differentiation after skin injury. In parallel, inhibits skin inflammation through the inhibition of inflammatory cytokines such as IL6 and TNF. Induced by IL22 in lung epithelial cells, inhibits cytokine production and regulates allergic airway inflammation. Induced in small intestine by inulin-enriched diet and Lactobacillus gasseri enriched microbiome, plays a role in the improvement of gut barrier function, the regulation of energy balance and glucose levels. Modulates microbiota composition in duodenal contents. Produced by nociceptor in response to endotoxins, prevents endotoxic death by targeting kynurenine pathway in microglia. Its function is as follows. Has bacteriostatic activity. Has bactericidal activity against L.monocytogenes and methicillin-resistant S.aureus. This is Regenerating islet-derived protein 3-gamma from Homo sapiens (Human).